The following is a 272-amino-acid chain: 2,3,4,5-tetrahydropyridine-2,6-dicarboxylate N-succinyltransferase (272 aa).

Substrate contacts are provided by Arg-104 and Asp-141.

The protein belongs to the transferase hexapeptide repeat family. As to quaternary structure, homotrimer.

It localises to the cytoplasm. It catalyses the reaction (S)-2,3,4,5-tetrahydrodipicolinate + succinyl-CoA + H2O = (S)-2-succinylamino-6-oxoheptanedioate + CoA. It participates in amino-acid biosynthesis; L-lysine biosynthesis via DAP pathway; LL-2,6-diaminopimelate from (S)-tetrahydrodipicolinate (succinylase route): step 1/3. The chain is 2,3,4,5-tetrahydropyridine-2,6-dicarboxylate N-succinyltransferase from Alkalilimnicola ehrlichii (strain ATCC BAA-1101 / DSM 17681 / MLHE-1).